We begin with the raw amino-acid sequence, 451 residues long: Cyclin-dependent kinase 18 (451 aa).

Phosphoserine is present on residues Ser-12, Ser-51, Ser-66, Ser-75, and Ser-109. The Protein kinase domain occupies 121 to 402 (YVKLDKLGEG…AEAALNHPYF (282 aa)). ATP is bound by residues 127-135 (LGEGTYATV) and Lys-150. The active-site Proton acceptor is the Asp-242. Phosphoserine is present on residues Ser-417 and Ser-420.

This sequence belongs to the protein kinase superfamily. CMGC Ser/Thr protein kinase family. CDC2/CDKX subfamily. In brain, kidney, intestine and at a much lower level, in fetal tissues.

It catalyses the reaction L-seryl-[protein] + ATP = O-phospho-L-seryl-[protein] + ADP + H(+). The catalysed reaction is L-threonyl-[protein] + ATP = O-phospho-L-threonyl-[protein] + ADP + H(+). May play a role in signal transduction cascades in terminally differentiated cells. This Mus musculus (Mouse) protein is Cyclin-dependent kinase 18 (Cdk18).